Consider the following 821-residue polypeptide: Glycerol-3-phosphate acyltransferase (821 aa).

The HXXXXD motif signature appears at 310–315; that stretch reads CHRSHM.

It belongs to the GPAT/DAPAT family.

It localises to the cell membrane. The enzyme catalyses sn-glycerol 3-phosphate + an acyl-CoA = a 1-acyl-sn-glycero-3-phosphate + CoA. Its pathway is phospholipid metabolism; CDP-diacylglycerol biosynthesis; CDP-diacylglycerol from sn-glycerol 3-phosphate: step 1/3. The sequence is that of Glycerol-3-phosphate acyltransferase from Baumannia cicadellinicola subsp. Homalodisca coagulata.